A 133-amino-acid polypeptide reads, in one-letter code: U-scoloptoxin(11)-Sm1a (133 aa).

An N-terminal signal peptide occupies residues 1–19; sequence MIWFLAFILFLAAGELVSS.

The protein belongs to the scoloptoxin-11 family. Post-translationally, contains 10 disulfide bonds. In terms of tissue distribution, expressed by the venom gland.

The protein resides in the secreted. This is U-scoloptoxin(11)-Sm1a from Scolopendra morsitans (Tanzanian blue ringleg centipede).